The primary structure comprises 490 residues: Ketol-acid reductoisomerase (NADP(+)) (490 aa).

In terms of domain architecture, KARI N-terminal Rossmann spans 15–208 (INLQKCKLID…GSHHAGILHS (194 aa)). Residues 45–48 (CGSQ), arginine 68, serine 78, and 108–110 (DKQ) contribute to the NADP(+) site. Histidine 132 is a catalytic residue. Residue glycine 158 coordinates NADP(+). 2 consecutive KARI C-terminal knotted domains span residues 209–344 (SFIA…KCNI) and 345–484 (YYKQ…MTSM). Residues aspartate 217, glutamate 221, glutamate 389, and glutamate 393 each coordinate Mg(2+). Serine 414 is a binding site for substrate.

The protein belongs to the ketol-acid reductoisomerase family. Mg(2+) serves as cofactor.

It catalyses the reaction (2R)-2,3-dihydroxy-3-methylbutanoate + NADP(+) = (2S)-2-acetolactate + NADPH + H(+). It carries out the reaction (2R,3R)-2,3-dihydroxy-3-methylpentanoate + NADP(+) = (S)-2-ethyl-2-hydroxy-3-oxobutanoate + NADPH + H(+). It participates in amino-acid biosynthesis; L-isoleucine biosynthesis; L-isoleucine from 2-oxobutanoate: step 2/4. Its pathway is amino-acid biosynthesis; L-valine biosynthesis; L-valine from pyruvate: step 2/4. In terms of biological role, involved in the biosynthesis of branched-chain amino acids (BCAA). Catalyzes an alkyl-migration followed by a ketol-acid reduction of (S)-2-acetolactate (S2AL) to yield (R)-2,3-dihydroxy-isovalerate. In the isomerase reaction, S2AL is rearranged via a Mg-dependent methyl migration to produce 3-hydroxy-3-methyl-2-ketobutyrate (HMKB). In the reductase reaction, this 2-ketoacid undergoes a metal-dependent reduction by NADPH to yield (R)-2,3-dihydroxy-isovalerate. In Buchnera aphidicola subsp. Melaphis rhois, this protein is Ketol-acid reductoisomerase (NADP(+)).